A 208-amino-acid polypeptide reads, in one-letter code: N-(5'-phosphoribosyl)anthranilate isomerase (208 aa).

It belongs to the TrpF family.

It catalyses the reaction N-(5-phospho-beta-D-ribosyl)anthranilate = 1-(2-carboxyphenylamino)-1-deoxy-D-ribulose 5-phosphate. It functions in the pathway amino-acid biosynthesis; L-tryptophan biosynthesis; L-tryptophan from chorismate: step 3/5. This is N-(5'-phosphoribosyl)anthranilate isomerase from Chlamydia trachomatis serovar L2 (strain ATCC VR-902B / DSM 19102 / 434/Bu).